Consider the following 431-residue polypeptide: Histidinol dehydrogenase (431 aa).

NAD(+) is bound by residues tyrosine 131, glutamine 193, and asparagine 216. Substrate is bound by residues serine 239, glutamine 261, and histidine 264. The Zn(2+) site is built by glutamine 261 and histidine 264. Active-site proton acceptor residues include glutamate 329 and histidine 330. Residues histidine 330, aspartate 363, glutamate 417, and histidine 422 each coordinate substrate. Aspartate 363 contributes to the Zn(2+) binding site. Histidine 422 provides a ligand contact to Zn(2+).

It belongs to the histidinol dehydrogenase family. Zn(2+) serves as cofactor.

It catalyses the reaction L-histidinol + 2 NAD(+) + H2O = L-histidine + 2 NADH + 3 H(+). It participates in amino-acid biosynthesis; L-histidine biosynthesis; L-histidine from 5-phospho-alpha-D-ribose 1-diphosphate: step 9/9. In terms of biological role, catalyzes the sequential NAD-dependent oxidations of L-histidinol to L-histidinaldehyde and then to L-histidine. The protein is Histidinol dehydrogenase of Clostridium acetobutylicum (strain ATCC 824 / DSM 792 / JCM 1419 / IAM 19013 / LMG 5710 / NBRC 13948 / NRRL B-527 / VKM B-1787 / 2291 / W).